The chain runs to 805 residues: N-(5-amino-5-carboxypentanoyl)-L-cysteinyl-D-valine synthase (805 aa).

Positions 783–805 (PDTGGGAVGSTTTGGVRGELREI) are disordered.

This sequence belongs to the ATP-dependent AMP-binding enzyme family. It depends on pantetheine 4'-phosphate as a cofactor.

The enzyme catalyses L-2-aminoadipate + L-valine + L-cysteine + 3 ATP + H2O = N-[(5S)-5-amino-5-carboxypentanoyl]-L-cysteinyl-D-valine + 3 AMP + 3 diphosphate + 3 H(+). It functions in the pathway antibiotic biosynthesis; penicillin G biosynthesis; penicillin G from L-alpha-aminoadipate and L-cysteine and L-valine: step 1/3. Functionally, each of the constituent amino acids of ACV are activated as aminoacyl-adenylates with peptide bonds formed through the participation of amino acid thioester intermediates. This is N-(5-amino-5-carboxypentanoyl)-L-cysteinyl-D-valine synthase (pcbAB) from Streptomyces clavuligerus.